The following is a 156-amino-acid chain: Acyl carrier protein, mitochondrial (156 aa).

A mitochondrion-targeting transit peptide spans 1 to 68 (MASRVLSAYV…GRVTQLCRQY (68 aa)). A Carrier domain is found at 77–152 (EGIQDRVLYV…EIVDYIADKK (76 aa)). The residue at position 88 (Lys-88) is an N6-acetyllysine. Ser-112 carries the O-(pantetheine 4'-phosphoryl)serine modification.

It belongs to the acyl carrier protein (ACP) family. In terms of assembly, mammalian complex I is composed of 45 different subunits. Interacts with ETFRF1. Identified in a complex composed of MALSU1, MIEF1 upstream open reading frame protein and NDUFAB1; within the trimeric complex, MIEF1 upstream open reading frame protein functions as a bridging scaffold that interacts with MALSU1 on one side, and with NDUFAB1 on the other side. The complex interacts with the mitochondrial large ribosomal subunit. Interacts with alpha-1-microglobulin chain; this interaction is required for the maintenance of mitochondrial redox homeostasis. Component of the mitochondrial core iron-sulfur cluster (ISC) complex composed of NFS1, LYRM4, NDUFAB1, ISCU, FXN, and FDX2; this complex is a heterohexamer containing two copies of each monomer. Component of the cyteine desulfurase complex composed of NFS1, LYRM4 and NDUFAB1; this complex contributes to the stability and cysteine desulfurase activity of NFS1. Phosphopantetheinylation at Ser-112 is essential for interactions with LYR motif-containing proteins.

The protein resides in the mitochondrion. Its function is as follows. Carrier of the growing fatty acid chain in fatty acid biosynthesis. Accessory and non-catalytic subunit of the mitochondrial membrane respiratory chain NADH dehydrogenase (Complex I), which functions in the transfer of electrons from NADH to the respiratory chain. Accessory protein, of the core iron-sulfur cluster (ISC) assembly complex, that regulates, in association with LYRM4, the stability and the cysteine desulfurase activity of NFS1 and participates in the [2Fe-2S] clusters assembly on the scaffolding protein ISCU. The core iron-sulfur cluster (ISC) assembly complex is involved in the de novo synthesis of a [2Fe-2S] cluster, the first step of the mitochondrial iron-sulfur protein biogenesis. This process is initiated by the cysteine desulfurase complex (NFS1:LYRM4:NDUFAB1) that produces persulfide which is delivered on the scaffold protein ISCU in a FXN-dependent manner. Then this complex is stabilized by FDX2 which provides reducing equivalents to accomplish the [2Fe-2S] cluster assembly. Finally, the [2Fe-2S] cluster is transferred from ISCU to chaperone proteins, including HSCB, HSPA9 and GLRX5. The chain is Acyl carrier protein, mitochondrial from Gorilla gorilla gorilla (Western lowland gorilla).